The sequence spans 483 residues: MKVWFAATEATPFIKTGGLADVVGSLPLALAEEGAEVSVILPNYGQIKEQYKLEMEFLFDFIVPVGWRQQFGAVLRLKQDGVTFYFIDNEYYFKRDGVIYGHYDDAERFAYFSRAVLEMIQRVDAEEVPDVIHCHDWQTGVLPAFLRIHYQHLNRYQEIKTVFTIHNLQYQGVFPEEVLGDLLGLSHEHFTAEGIAHNGLVNYMKAGLVHANQITTVSPSYRDEIMDPYYGETLEPVLQHRAVDVRGILNGIDYRQFSPETDEHLVENYDVKTVEEGKAANKAALQQELGLPVNPDVPLFGFVSRLVDQKGIDLLAHILPDLFELDAQFIILGSGEAEYEGLFQHASTIRPDKVASYIGFDVGLAQRIYAGSDAFLMPSRFEPCGLSQLISMKYGSLPIVRETGGLRDTVQPFNQFTLEGNGFSFSNYNAQEFLDAIKRTIETYHDKPVFKHLIETAMQEDFSWIRSADEYLALYRLIAPSAD.

Lysine 15 lines the ADP-alpha-D-glucose pocket.

It belongs to the glycosyltransferase 1 family. Bacterial/plant glycogen synthase subfamily.

It carries out the reaction [(1-&gt;4)-alpha-D-glucosyl](n) + ADP-alpha-D-glucose = [(1-&gt;4)-alpha-D-glucosyl](n+1) + ADP + H(+). It functions in the pathway glycan biosynthesis; glycogen biosynthesis. Its function is as follows. Synthesizes alpha-1,4-glucan chains using ADP-glucose. This chain is Glycogen synthase, found in Exiguobacterium sibiricum (strain DSM 17290 / CCUG 55495 / CIP 109462 / JCM 13490 / 255-15).